The chain runs to 1299 residues: DNA-directed RNA polymerase subunit beta' (1299 aa).

4 residues coordinate Zn(2+): C60, C62, C75, and C78. The interval 385 to 405 (GRRGRPVTGPGNRPLKSLSDM) is disordered. D535, D537, and D539 together coordinate Mg(2+). 4 residues coordinate Zn(2+): C886, C962, C969, and C972.

The protein belongs to the RNA polymerase beta' chain family. The RNAP catalytic core consists of 2 alpha, 1 beta, 1 beta' and 1 omega subunit. When a sigma factor is associated with the core the holoenzyme is formed, which can initiate transcription. It depends on Mg(2+) as a cofactor. Requires Zn(2+) as cofactor.

It carries out the reaction RNA(n) + a ribonucleoside 5'-triphosphate = RNA(n+1) + diphosphate. DNA-dependent RNA polymerase catalyzes the transcription of DNA into RNA using the four ribonucleoside triphosphates as substrates. This Streptomyces avermitilis (strain ATCC 31267 / DSM 46492 / JCM 5070 / NBRC 14893 / NCIMB 12804 / NRRL 8165 / MA-4680) protein is DNA-directed RNA polymerase subunit beta'.